Consider the following 171-residue polypeptide: MTKQNAFTREDLLRCSRGELFGPGNAQLPAPNMLMVDRITHISEEGGKYGKGELVAELDITPDLWFFACHFEGDPVMPGCLGLDAMWQLVGFFLGWQGLPGRGRALGSGEVKFFGQVLPTAKKVTYNIQIKRVLKGKLNLAIADGSVSVDGREIYTAEGLRVGVFTSTDNF.

Residue His70 is part of the active site.

Belongs to the thioester dehydratase family. FabA subfamily. As to quaternary structure, homodimer.

The protein resides in the cytoplasm. It catalyses the reaction a (3R)-hydroxyacyl-[ACP] = a (2E)-enoyl-[ACP] + H2O. The catalysed reaction is (3R)-hydroxydecanoyl-[ACP] = (2E)-decenoyl-[ACP] + H2O. It carries out the reaction (2E)-decenoyl-[ACP] = (3Z)-decenoyl-[ACP]. Its pathway is lipid metabolism; fatty acid biosynthesis. Its function is as follows. Necessary for the introduction of cis unsaturation into fatty acids. Catalyzes the dehydration of (3R)-3-hydroxydecanoyl-ACP to E-(2)-decenoyl-ACP and then its isomerization to Z-(3)-decenoyl-ACP. Can catalyze the dehydratase reaction for beta-hydroxyacyl-ACPs with saturated chain lengths up to 16:0, being most active on intermediate chain length. The polypeptide is 3-hydroxydecanoyl-[acyl-carrier-protein] dehydratase (Pseudomonas fluorescens (strain SBW25)).